Reading from the N-terminus, the 427-residue chain is tRNA(Ile)-lysidine synthase (427 aa).

18 to 23 (SGGLDS) provides a ligand contact to ATP.

The protein belongs to the tRNA(Ile)-lysidine synthase family.

It is found in the cytoplasm. It carries out the reaction cytidine(34) in tRNA(Ile2) + L-lysine + ATP = lysidine(34) in tRNA(Ile2) + AMP + diphosphate + H(+). Ligates lysine onto the cytidine present at position 34 of the AUA codon-specific tRNA(Ile) that contains the anticodon CAU, in an ATP-dependent manner. Cytidine is converted to lysidine, thus changing the amino acid specificity of the tRNA from methionine to isoleucine. This chain is tRNA(Ile)-lysidine synthase, found in Pseudomonas putida (strain ATCC 47054 / DSM 6125 / CFBP 8728 / NCIMB 11950 / KT2440).